The following is a 99-amino-acid chain: Plastocyanin (99 aa).

The Plastocyanin-like domain occupies 1 to 99 (LDVLLGSDDG…AGMVGKVTVN (99 aa)). 4 residues coordinate Cu cation: histidine 37, cysteine 84, histidine 87, and methionine 92.

Belongs to the plastocyanin family. It depends on Cu(2+) as a cofactor.

The protein localises to the plastid. The protein resides in the chloroplast thylakoid membrane. Functionally, participates in electron transfer between P700 and the cytochrome b6-f complex in photosystem I. The chain is Plastocyanin (PETE) from Mercurialis perennis (Dog's mercury).